A 136-amino-acid polypeptide reads, in one-letter code: Histone H3 (136 aa).

The interval 1–43 (MARTKQTARKSTGGKAPRKQLATKAARKSAPASGGVKKPHRFR) is disordered. N6-methylated lysine is present on Lys-5. Lys-10 is modified (N6-acetyllysine; alternate). N6-methylated lysine; alternate is present on Lys-10. At Ser-11 the chain carries Phosphoserine. Thr-12 carries the phosphothreonine modification. An N6-acetyllysine modification is found at Lys-15. Residues Lys-19 and Lys-24 each carry the N6-acetyllysine; alternate modification. Residues Lys-19 and Lys-24 each carry the N6-methylated lysine; alternate modification. Lys-28 carries the post-translational modification N6-methylated lysine. Ser-29 is modified (phosphoserine). Residue Lys-37 is modified to N6-methylated lysine.

This sequence belongs to the histone H3 family. In terms of assembly, the nucleosome is a histone octamer containing two molecules each of H2A, H2B, H3 and H4 assembled in one H3-H4 heterotetramer and two H2A-H2B heterodimers. The octamer wraps approximately 147 bp of DNA. Acetylation is generally linked to gene activation. Can be acetylated to form H3K9ac, H3K14ac, H3K18ac and H3K23ac. H3K9ac could compete with H3K9me and prevent gene silencing. H3K9ac is restricted to euchromatin. Post-translationally, methylated to form mainly H3K4me, H3K9me, H3K18me, H3K23me, H3K27me and H3K36me. H3K4me1/2/3, H3K9me3, H3K27me3 and H3K36me1/2/3 are typical marks for euchromatin, whereas heterochromatic chromocenters are enriched in H3K9me1/2 and H3K27me1/2. H2BK143ub1 is probably prerequisite for H3K4me. In terms of processing, can be phosphorylated to form H3S10ph, H3T11ph and H3S28ph.

Its subcellular location is the nucleus. The protein resides in the chromosome. Core component of nucleosome. Nucleosomes wrap and compact DNA into chromatin, limiting DNA accessibility to the cellular machineries which require DNA as a template. Histones thereby play a central role in transcription regulation, DNA repair, DNA replication and chromosomal stability. DNA accessibility is regulated via a complex set of post-translational modifications of histones, also called histone code, and nucleosome remodeling. This Griffithsia japonica (Red alga) protein is Histone H3.